Reading from the N-terminus, the 160-residue chain is S-ribosylhomocysteine lyase (160 aa).

Fe cation is bound by residues histidine 57, histidine 61, and cysteine 127.

It belongs to the LuxS family. In terms of assembly, homodimer. Fe cation is required as a cofactor.

The enzyme catalyses S-(5-deoxy-D-ribos-5-yl)-L-homocysteine = (S)-4,5-dihydroxypentane-2,3-dione + L-homocysteine. Functionally, involved in the synthesis of autoinducer 2 (AI-2) which is secreted by bacteria and is used to communicate both the cell density and the metabolic potential of the environment. The regulation of gene expression in response to changes in cell density is called quorum sensing. Catalyzes the transformation of S-ribosylhomocysteine (RHC) to homocysteine (HC) and 4,5-dihydroxy-2,3-pentadione (DPD). In Streptococcus pneumoniae (strain CGSP14), this protein is S-ribosylhomocysteine lyase.